Reading from the N-terminus, the 346-residue chain is N-acetyl-gamma-glutamyl-phosphate reductase (346 aa).

Residue C149 is part of the active site.

This sequence belongs to the NAGSA dehydrogenase family. Type 1 subfamily.

The protein resides in the cytoplasm. It catalyses the reaction N-acetyl-L-glutamate 5-semialdehyde + phosphate + NADP(+) = N-acetyl-L-glutamyl 5-phosphate + NADPH + H(+). It participates in amino-acid biosynthesis; L-arginine biosynthesis; N(2)-acetyl-L-ornithine from L-glutamate: step 3/4. In terms of biological role, catalyzes the NADPH-dependent reduction of N-acetyl-5-glutamyl phosphate to yield N-acetyl-L-glutamate 5-semialdehyde. This is N-acetyl-gamma-glutamyl-phosphate reductase from Saccharophagus degradans (strain 2-40 / ATCC 43961 / DSM 17024).